The primary structure comprises 364 residues: Protein leg1b (364 aa).

Positions 1–22 are cleaved as a signal peptide; sequence MSEMGFLRSVAAVLLLAVFSHA. N70 is a glycosylation site (N-linked (GlcNAc...) asparagine).

The protein belongs to the LEG1 family. As to expression, detected in all tissues tested, with the highest levels in serum (at protein level). At mRNA level, only expressed in liver.

It is found in the secreted. Involved in early development of liver, exocrine pancreas and intestine, probably through cell cycle regulation. In liver, its function is partially redundant with leg1a function. This is Protein leg1b from Danio rerio (Zebrafish).